Here is a 327-residue protein sequence, read N- to C-terminus: Cobalamin biosynthesis protein CobD (327 aa).

Transmembrane regions (helical) follow at residues 61 to 78 (MWLT…GLVI), 80 to 102 (SILP…ILLA), 160 to 182 (GIVA…YKFI), and 300 to 322 (AALV…ASLV).

This sequence belongs to the CobD/CbiB family.

The protein resides in the cell membrane. It functions in the pathway cofactor biosynthesis; adenosylcobalamin biosynthesis. In terms of biological role, converts cobyric acid to cobinamide by the addition of aminopropanol on the F carboxylic group. The polypeptide is Cobalamin biosynthesis protein CobD (Brucella melitensis biotype 1 (strain ATCC 23456 / CCUG 17765 / NCTC 10094 / 16M)).